Here is a 228-residue protein sequence, read N- to C-terminus: Putative lipoprotein LprH (228 aa).

Positions 1–27 are cleaved as a signal peptide; sequence MACLGRPGCRGWAGASLVLVVVLALAA. Cys-28 carries the N-palmitoyl cysteine lipid modification. Cys-28 carries S-diacylglycerol cysteine lipidation. Residues 191-211 traverse the membrane as a helical segment; sequence GLAVVPHAVLVLSACGFKPGF.

It is found in the cell membrane. This is Putative lipoprotein LprH (lprH) from Mycobacterium bovis (strain ATCC BAA-935 / AF2122/97).